The primary structure comprises 160 residues: Transcription elongation factor GreA (160 aa).

A coiled-coil region spans residues 1 to 72; sequence MAEKTYPMTL…QISSLETKIR (72 aa).

It belongs to the GreA/GreB family.

Necessary for efficient RNA polymerase transcription elongation past template-encoded arresting sites. The arresting sites in DNA have the property of trapping a certain fraction of elongating RNA polymerases that pass through, resulting in locked ternary complexes. Cleavage of the nascent transcript by cleavage factors such as GreA or GreB allows the resumption of elongation from the new 3'terminus. GreA releases sequences of 2 to 3 nucleotides. This is Transcription elongation factor GreA from Streptococcus gordonii (strain Challis / ATCC 35105 / BCRC 15272 / CH1 / DL1 / V288).